A 288-amino-acid polypeptide reads, in one-letter code: Pantothenate synthetase (288 aa).

Residue 30–37 coordinates ATP; sequence MGNLHEGH. The Proton donor role is filled by His37. Position 61 (Gln61) interacts with (R)-pantoate. Position 61 (Gln61) interacts with beta-alanine. 148 to 151 contributes to the ATP binding site; that stretch reads GQKD. (R)-pantoate is bound at residue Gln154. ATP contacts are provided by residues Val177 and 185-188; that span reads LSSR.

It belongs to the pantothenate synthetase family. As to quaternary structure, homodimer.

It is found in the cytoplasm. It catalyses the reaction (R)-pantoate + beta-alanine + ATP = (R)-pantothenate + AMP + diphosphate + H(+). It participates in cofactor biosynthesis; (R)-pantothenate biosynthesis; (R)-pantothenate from (R)-pantoate and beta-alanine: step 1/1. In terms of biological role, catalyzes the condensation of pantoate with beta-alanine in an ATP-dependent reaction via a pantoyl-adenylate intermediate. In Psychrobacter arcticus (strain DSM 17307 / VKM B-2377 / 273-4), this protein is Pantothenate synthetase.